Reading from the N-terminus, the 407-residue chain is Multifunctional CCA protein (407 aa).

Positions 8 and 11 each coordinate ATP. 2 residues coordinate CTP: glycine 8 and arginine 11. Mg(2+) is bound by residues aspartate 21 and aspartate 23. ATP-binding residues include arginine 91, arginine 137, and arginine 140. Residues arginine 91, arginine 137, and arginine 140 each coordinate CTP. Residues 228–329 (SGIHTLMVAQ…IKIFDKMDVW (102 aa)) form the HD domain.

Belongs to the tRNA nucleotidyltransferase/poly(A) polymerase family. Bacterial CCA-adding enzyme type 1 subfamily. Monomer. Can also form homodimers and oligomers. Mg(2+) is required as a cofactor. It depends on Ni(2+) as a cofactor.

It carries out the reaction a tRNA precursor + 2 CTP + ATP = a tRNA with a 3' CCA end + 3 diphosphate. The enzyme catalyses a tRNA with a 3' CCA end + 2 CTP + ATP = a tRNA with a 3' CCACCA end + 3 diphosphate. In terms of biological role, catalyzes the addition and repair of the essential 3'-terminal CCA sequence in tRNAs without using a nucleic acid template. Adds these three nucleotides in the order of C, C, and A to the tRNA nucleotide-73, using CTP and ATP as substrates and producing inorganic pyrophosphate. tRNA 3'-terminal CCA addition is required both for tRNA processing and repair. Also involved in tRNA surveillance by mediating tandem CCA addition to generate a CCACCA at the 3' terminus of unstable tRNAs. While stable tRNAs receive only 3'-terminal CCA, unstable tRNAs are marked with CCACCA and rapidly degraded. This Aliivibrio fischeri (strain MJ11) (Vibrio fischeri) protein is Multifunctional CCA protein.